The following is a 150-amino-acid chain: UPF0756 membrane protein APL_0366 (150 aa).

4 consecutive transmembrane segments (helical) span residues 12-34 (LVVL…ATVL), 52-72 (HGLS…IVSG), 82-102 (FLNW…WLGG), and 123-143 (IIGV…AGIL).

It belongs to the UPF0756 family.

The protein localises to the cell membrane. This Actinobacillus pleuropneumoniae serotype 5b (strain L20) protein is UPF0756 membrane protein APL_0366.